We begin with the raw amino-acid sequence, 296 residues long: 2-methylisocitrate lyase (296 aa).

Serine 45–glycine 47 provides a ligand contact to substrate. Residues aspartate 85 and aspartate 87 each contribute to the Mg(2+) site. Substrate-binding positions include cysteine 123–glycine 124, arginine 158, glutamate 188, asparagine 210–threonine 212, arginine 241, and arginine 270.

The protein belongs to the isocitrate lyase/PEP mutase superfamily. Methylisocitrate lyase family. In terms of assembly, homotetramer; dimer of dimers. The cofactor is Mg(2+).

It carries out the reaction (2S,3R)-3-hydroxybutane-1,2,3-tricarboxylate = pyruvate + succinate. It functions in the pathway organic acid metabolism; propanoate degradation. Functionally, involved in the catabolism of short chain fatty acids (SCFA) via the 2-methylcitrate cycle I (propionate degradation route). Catalyzes the thermodynamically favored C-C bond cleavage of (2R,3S)-2-methylisocitrate to yield pyruvate and succinate via an alpha-carboxy-carbanion intermediate. The protein is 2-methylisocitrate lyase of Escherichia coli (strain K12).